A 202-amino-acid polypeptide reads, in one-letter code: Dephospho-CoA kinase (202 aa).

The DPCK domain occupies 6 to 202 (KISVTGDPSS…QCFKALKGTI (197 aa)). 14 to 19 (SSGKTE) is a binding site for ATP.

It belongs to the CoaE family.

Its subcellular location is the cytoplasm. The enzyme catalyses 3'-dephospho-CoA + ATP = ADP + CoA + H(+). The protein operates within cofactor biosynthesis; coenzyme A biosynthesis; CoA from (R)-pantothenate: step 5/5. In terms of biological role, catalyzes the phosphorylation of the 3'-hydroxyl group of dephosphocoenzyme A to form coenzyme A. This is Dephospho-CoA kinase from Chlamydia trachomatis serovar D (strain ATCC VR-885 / DSM 19411 / UW-3/Cx).